The following is a 359-amino-acid chain: DNA replication and repair protein RecF (359 aa).

30 to 37 (GQNAQGKT) is a binding site for ATP.

This sequence belongs to the RecF family.

It is found in the cytoplasm. Its function is as follows. The RecF protein is involved in DNA metabolism; it is required for DNA replication and normal SOS inducibility. RecF binds preferentially to single-stranded, linear DNA. It also seems to bind ATP. The protein is DNA replication and repair protein RecF of Lactococcus lactis subsp. cremoris (strain SK11).